The following is an 81-amino-acid chain: Short neurotoxin 2 (81 aa).

The first 21 residues, Met-1–Thr-21, serve as a signal peptide directing secretion. Cystine bridges form between Cys-24/Cys-43, Cys-38/Cys-60, Cys-62/Cys-73, and Cys-74/Cys-79.

The protein belongs to the three-finger toxin family. Short-chain subfamily. Type I alpha-neurotoxin sub-subfamily. In terms of tissue distribution, expressed by the venom gland.

Its subcellular location is the secreted. In terms of biological role, binds to muscle nicotinic acetylcholine receptor (nAChR) and inhibit acetylcholine from binding to the receptor, thereby impairing neuromuscular transmission. The polypeptide is Short neurotoxin 2 (Cryptophis nigrescens (Eastern small-eyed snake)).